The sequence spans 1347 residues: Spermatogenesis-associated protein 31A3 (1347 aa).

Residues 23–43 traverse the membrane as a helical segment; the sequence is PWVLDIFLTLVFALGFFFLLL. Disordered stretches follow at residues 55–87, 108–142, 154–235, 373–397, 627–658, 900–955, 1084–1161, and 1313–1335; these read PSPS…GREC, HLDK…HEPM, SPDP…STLI, EQDT…GPQK, QDES…EAQK, RGIP…REAV, VHEE…PSVS, and KAVS…SHHH. The segment covering 60–82 has biased composition (basic residues); it reads GKRKCPVGRRRRPRGRMKNHSLR. Residues 165 to 178 show a composition bias toward polar residues; sequence LASTPSPGPMTTSV. Positions 198 to 211 are enriched in pro residues; that stretch reads PEPPALFPHPPHTP. 2 stretches are compositionally biased toward polar residues: residues 627-651 and 927-948; these read QDES…STGE and LTYS…SSKA. Basic and acidic residues-rich tracts occupy residues 1108–1127 and 1137–1146; these read HKSE…RLEG and RKTEDTHQDE.

The protein belongs to the SPATA31 family.

The protein resides in the membrane. Its function is as follows. May play a role in spermatogenesis. The chain is Spermatogenesis-associated protein 31A3 (SPATA31A3) from Homo sapiens (Human).